The primary structure comprises 121 residues: Basic phospholipase A2 homolog blK-PLA2 (121 aa).

Cystine bridges form between Cys-26–Cys-115, Cys-28–Cys-44, Cys-43–Cys-95, Cys-49–Cys-121, Cys-50–Cys-88, Cys-57–Cys-81, and Cys-75–Cys-86. The important for membrane-damaging activities in eukaryotes and bacteria; heparin-binding stretch occupies residues 105 to 117; the sequence is KKYRYHLKPFCKK.

Belongs to the phospholipase A2 family. Group II subfamily. K49 sub-subfamily. In terms of assembly, homodimer; non-covalently linked. As to expression, expressed by the venom gland.

It is found in the secreted. Its function is as follows. Snake venom phospholipase A2 (PLA2) homolog that lacks enzymatic activity. Shows myotoxic and edema-inducing activities in vivo. A model of myotoxic mechanism has been proposed: an apo Lys49-PLA2 is activated by the entrance of a hydrophobic molecule (e.g. fatty acid) at the hydrophobic channel of the protein leading to a reorientation of a monomer. This reorientation causes a transition between 'inactive' to 'active' states, causing alignment of C-terminal and membrane-docking sites (MDoS) side-by-side and putting the membrane-disruption sites (MDiS) in the same plane, exposed to solvent and in a symmetric position for both monomers. The MDoS region stabilizes the toxin on membrane by the interaction of charged residues with phospholipid head groups. Subsequently, the MDiS region destabilizes the membrane with penetration of hydrophobic residues. This insertion causes a disorganization of the membrane, allowing an uncontrolled influx of ions (i.e. calcium and sodium), and eventually triggering irreversible intracellular alterations and cell death. This is Basic phospholipase A2 homolog blK-PLA2 from Bothrops leucurus (Whitetail lancehead).